Reading from the N-terminus, the 491-residue chain is Probable aspartyl aminopeptidase (491 aa).

His90 contacts Zn(2+). Substrate is bound at residue His168. Asp278 contacts Zn(2+). Glu315 is a binding site for substrate. 2 residues coordinate Zn(2+): Glu316 and Asp361. Substrate contacts are provided by Asp361, His364, Lys389, and Tyr396. Residue His455 coordinates Zn(2+).

This sequence belongs to the peptidase M18 family. In terms of assembly, tetrahedron-shaped homododecamer built from six homodimers. Zn(2+) is required as a cofactor.

Its subcellular location is the cytoplasm. It carries out the reaction Release of an N-terminal aspartate or glutamate from a peptide, with a preference for aspartate.. In terms of biological role, likely to play an important role in intracellular protein and peptide metabolism. This chain is Probable aspartyl aminopeptidase, found in Ricinus communis (Castor bean).